An 803-amino-acid polypeptide reads, in one-letter code: Phenylalanine--tRNA ligase beta subunit (803 aa).

A tRNA-binding domain is found at 39–150; that stretch reads AKVLAPFTIA…ADAPVGAAYA (112 aa). Residues 400–475 enclose the B5 domain; the sequence is ADDKIIDFPL…RIVGVDKVPL (76 aa). Positions 453, 459, 462, and 463 each coordinate Mg(2+). One can recognise an FDX-ACB domain in the interval 709–802; sequence SAFHPVSRDF…VTKKTGGSLR (94 aa).

It belongs to the phenylalanyl-tRNA synthetase beta subunit family. Type 1 subfamily. In terms of assembly, tetramer of two alpha and two beta subunits. The cofactor is Mg(2+).

Its subcellular location is the cytoplasm. The enzyme catalyses tRNA(Phe) + L-phenylalanine + ATP = L-phenylalanyl-tRNA(Phe) + AMP + diphosphate + H(+). This is Phenylalanine--tRNA ligase beta subunit from Rhodopseudomonas palustris (strain ATCC BAA-98 / CGA009).